The following is a 70-amino-acid chain: Large ribosomal subunit protein bL31 (70 aa).

Residues C17, C19, C37, and C40 each contribute to the Zn(2+) site.

The protein belongs to the bacterial ribosomal protein bL31 family. Type A subfamily. Part of the 50S ribosomal subunit. It depends on Zn(2+) as a cofactor.

Its function is as follows. Binds the 23S rRNA. The chain is Large ribosomal subunit protein bL31 from Clostridium kluyveri (strain NBRC 12016).